The chain runs to 365 residues: WAT1-related protein At4g01430 (365 aa).

The next 10 helical transmembrane spans lie at 7–27 (WAPVIVMLISSVAMGSVNALV), 39–59 (IFGAYRMAISALILVPFSYIW), 76–96 (FISGLLGASLMQFFFLLGLSY), 100–120 (TVSMALVSMLPAITFALALIF), 132–152 (AGVLKVMGTLICIMGAMLLTF), 183–203 (WLLGCLYLVIGTVLLSLWMLF), 216–236 (YSSTCLMSVFASFQCAILSLY), 250–270 (FVILVTLYAGIVGQAMSTVVT), 280–300 (VFVSTFSPVSLVAATLFDFLI), and 305–325 (LYLGSILGSVVTITGLYVFLW). The region spanning 20–151 (MGSVNALVKK…ICIMGAMLLT (132 aa)) is the EamA 1 domain. The 109-residue stretch at 216 to 324 (YSSTCLMSVF…VTITGLYVFL (109 aa)) folds into the EamA 2 domain. The interval 339–365 (LNSSQFSQNKDNEDHTIANHKDTNLPV) is disordered. Residues 348 to 365 (KDNEDHTIANHKDTNLPV) are compositionally biased toward basic and acidic residues.

Belongs to the drug/metabolite transporter (DMT) superfamily. Plant drug/metabolite exporter (P-DME) (TC 2.A.7.4) family.

It is found in the membrane. The chain is WAT1-related protein At4g01430 from Arabidopsis thaliana (Mouse-ear cress).